Consider the following 194-residue polypeptide: Molybdenum cofactor guanylyltransferase (194 aa).

GTP contacts are provided by residues 12 to 14 (LAG), lysine 25, asparagine 53, aspartate 70, and aspartate 100. Aspartate 100 is a Mg(2+) binding site.

The protein belongs to the MobA family. Monomer. Mg(2+) serves as cofactor.

The protein resides in the cytoplasm. It catalyses the reaction Mo-molybdopterin + GTP + H(+) = Mo-molybdopterin guanine dinucleotide + diphosphate. In terms of biological role, transfers a GMP moiety from GTP to Mo-molybdopterin (Mo-MPT) cofactor (Moco or molybdenum cofactor) to form Mo-molybdopterin guanine dinucleotide (Mo-MGD) cofactor. The chain is Molybdenum cofactor guanylyltransferase from Aliivibrio fischeri (strain ATCC 700601 / ES114) (Vibrio fischeri).